The primary structure comprises 430 residues: Elongation factor 1-gamma (430 aa).

A GST N-terminal domain is found at Val2–Ser84. In terms of domain architecture, GST C-terminal spans Ser85 to Phe213. Basic and acidic residues-rich tracts occupy residues Lys232 to Glu255 and Pro269 to Met278. A disordered region spans residues Lys232–Met278. Positions Ser271–Lys430 constitute an EF-1-gamma C-terminal domain.

EF-1 is composed of four subunits: alpha, beta, delta, and gamma.

Probably plays a role in anchoring the complex to other cellular components. The sequence is that of Elongation factor 1-gamma from Artemia salina (Brine shrimp).